A 735-amino-acid chain; its full sequence is Lebercilin-like protein (735 aa).

Disordered regions lie at residues 12-54 (TEAH…NGSV) and 91-115 (EKPL…RGQK). The span at 43–53 (QSQNSQASNGS) shows a compositional bias: low complexity. A coiled-coil region spans residues 205 to 335 (TAKHQNEVKN…QQKLKEKDRE (131 aa)). Disordered regions lie at residues 356–379 (YPKV…NMRH), 473–597 (SKEV…PRKH), 632–657 (KHRS…AGAR), and 685–735 (GRAG…KTVV). The segment covering 487–525 (TPRRPKENKEDQEKRAIPAEAEPTAKESEAHKDAEDKAL) has biased composition (basic and acidic residues). Over residues 528-541 (AAGNAGDAGDAGDA) the composition is skewed to low complexity. Basic and acidic residues-rich tracts occupy residues 542-553 (GNDREVVGEHKV), 573-588 (EVHG…EPGR), and 632-641 (KHRSEQELRL). Positions 689-707 (SSDSEAVSKSPQTGPQASA) are enriched in polar residues.

Belongs to the LCA5 family.

In Mus musculus (Mouse), this protein is Lebercilin-like protein.